The sequence spans 273 residues: Nitrogenase iron protein (273 aa).

Position 8–15 (8–15 (GKGGIGKS)) interacts with ATP. C95 contacts [4Fe-4S] cluster. Residue R98 is modified to ADP-ribosylarginine; by dinitrogenase reductase ADP-ribosyltransferase. C130 provides a ligand contact to [4Fe-4S] cluster.

The protein belongs to the NifH/BchL/ChlL family. In terms of assembly, homodimer. [4Fe-4S] cluster is required as a cofactor. Post-translationally, the reversible ADP-ribosylation of Arg-98 inactivates the nitrogenase reductase and regulates nitrogenase activity.

It catalyses the reaction N2 + 8 reduced [2Fe-2S]-[ferredoxin] + 16 ATP + 16 H2O = H2 + 8 oxidized [2Fe-2S]-[ferredoxin] + 2 NH4(+) + 16 ADP + 16 phosphate + 6 H(+). Its function is as follows. The key enzymatic reactions in nitrogen fixation are catalyzed by the nitrogenase complex, which has 2 components: the iron protein and the molybdenum-iron protein. The protein is Nitrogenase iron protein of Methanosarcina mazei (strain ATCC BAA-159 / DSM 3647 / Goe1 / Go1 / JCM 11833 / OCM 88) (Methanosarcina frisia).